The chain runs to 624 residues: APC membrane recruitment protein 2 (624 aa).

Disordered stretches follow at residues 77-111 (EEPC…SVAK), 126-177 (ENVK…GLIL), 195-230 (PLCE…PLNG), 342-369 (ADQD…SKKN), and 397-588 (FSMI…ELPR). The segment covering 102–111 (DVSSDSSVAK) has biased composition (low complexity). Basic and acidic residues-rich tracts occupy residues 155–168 (SKKD…KEGA) and 195–204 (PLCEKEKSEE). Residues 352-363 (KGSKVVPGNGKK) show a composition bias toward low complexity. Composition is skewed to basic and acidic residues over residues 422–435 (REVK…DRNT) and 450–469 (ERGD…RNSD).

Belongs to the Amer family.

It is found in the cell membrane. Its function is as follows. Negative regulator of the canonical Wnt signaling pathway involved in neuroectodermal patterning. Acts by specifically binding phosphatidylinositol 4,5-bisphosphate (PtdIns(4,5)P2), translocating to the cell membrane and interacting with key regulators of the canonical Wnt signaling pathway, such as components of the beta-catenin destruction complex. This Xenopus laevis (African clawed frog) protein is APC membrane recruitment protein 2 (amer2).